The chain runs to 215 residues: Cytochrome b6 (215 aa).

The chain crosses the membrane as a helical span at residues Ile-32 to Phe-52. Heme c is bound at residue Cys-35. Residues His-86 and His-100 each contribute to the heme b site. 3 helical membrane passes run Val-90 to Phe-110, Leu-116 to Tyr-136, and Leu-186 to Ile-206. Heme b is bound by residues His-187 and His-202.

The protein belongs to the cytochrome b family. PetB subfamily. As to quaternary structure, the 4 large subunits of the cytochrome b6-f complex are cytochrome b6, subunit IV (17 kDa polypeptide, PetD), cytochrome f and the Rieske protein, while the 4 small subunits are PetG, PetL, PetM and PetN. The complex functions as a dimer. Heme b serves as cofactor. It depends on heme c as a cofactor.

The protein resides in the plastid. Its subcellular location is the chloroplast thylakoid membrane. In terms of biological role, component of the cytochrome b6-f complex, which mediates electron transfer between photosystem II (PSII) and photosystem I (PSI), cyclic electron flow around PSI, and state transitions. The polypeptide is Cytochrome b6 (Pyropia yezoensis (Susabi-nori)).